A 217-amino-acid polypeptide reads, in one-letter code: MAHSKAQRRGLLIILSSPSGAGKSTLAKRLRAWDSDISFSVSATTRKPRPGEVDGQDYHFVTVESFKQDVANGDMLEHAHVFGNFYGSPKGPVQTAINEGRDVLFDIDWQGAQQITNSDLGKHTLSIFLLPPSITELRRRLESRGQDDAETISRRMQKSWDEISHWGSYDHVLINEDLDETEEALKTIITATRLRRIQQPSLIEHARALQQEFEDLS.

A Guanylate kinase-like domain is found at 10-190 (GLLIILSSPS…TEEALKTIIT (181 aa)). 17 to 24 (SPSGAGKS) is a binding site for ATP.

It belongs to the guanylate kinase family.

The protein localises to the cytoplasm. It catalyses the reaction GMP + ATP = GDP + ADP. In terms of biological role, essential for recycling GMP and indirectly, cGMP. This chain is Guanylate kinase, found in Ruegeria sp. (strain TM1040) (Silicibacter sp.).